The primary structure comprises 263 residues: MARGPKKHLKRVAAPKHWMLDKLTGVFAPRPSTGPHKLRECLPLIIFLRNRLKYALTGDEVKKICMQRFIKIDGKVRTDITYPTGFMDVVSIEKTGENFRLIYDVKGRFTVHRITNEEAKYKLCKVRKILIGTKGIPHLVTHDARTIRYPDPLIKVNDTIRIDLDTGKITDFIKFETGNMCMVTGGANLGRIGVITNREKHPGSFDVVHVKDSIGNSFATRLSNIFVIGKGNKPWVSLPRGKGVRLTIAEERDKRLAAKQSSS.

The 64-residue stretch at 42 to 105 folds into the S4 RNA-binding domain; sequence LPLIIFLRNR…GENFRLIYDV (64 aa).

It belongs to the eukaryotic ribosomal protein eS4 family. In terms of assembly, component of the small ribosomal subunit. Part of the small subunit (SSU) processome, composed of more than 70 proteins and the RNA chaperone small nucleolar RNA (snoRNA) U3.

The protein localises to the cytoplasm. It is found in the nucleus. Its subcellular location is the nucleolus. In terms of biological role, component of the small ribosomal subunit. The ribosome is a large ribonucleoprotein complex responsible for the synthesis of proteins in the cell. Part of the small subunit (SSU) processome, first precursor of the small eukaryotic ribosomal subunit. During the assembly of the SSU processome in the nucleolus, many ribosome biogenesis factors, an RNA chaperone and ribosomal proteins associate with the nascent pre-rRNA and work in concert to generate RNA folding, modifications, rearrangements and cleavage as well as targeted degradation of pre-ribosomal RNA by the RNA exosome. The chain is Small ribosomal subunit protein eS4 (rps4x) from Danio rerio (Zebrafish).